Here is an 807-residue protein sequence, read N- to C-terminus: 85/88 kDa calcium-independent phospholipase A2 (807 aa).

At Ser13 the chain carries Phosphoserine. 9 ANK repeats span residues 120–147 (WTVTHLAVELGIRECFHHSRIISCANST), 151–181 (EGCTPLHLACRKGDSEILVELVQYCHAQMDV), 185–215 (KGETAFHYAVQGDNPQVLQLLGKNASAGLNQ), 219–248 (QGLTPLHLACKMGKQEMVRVLLLCNARCNI), 251–281 (PGGFPIHTAMKFSQKGCAEMIISMDSNQIHS), 286–312 (YGASPLHWAKNAEMARMLLKRGCDVDS), 316–345 (SGNTALHVAVMRNRFDCVMVLLTYGANAGA), 349–378 (HGNTPLHLAMSKDNMEMVKALIVFGAEVDT), and 382–403 (FGETPALIASKISKLITRKALL). 2 helical membrane passes run 481–501 (LLCLDGGGVKGLVIIQLLIAI) and 512–532 (LFDWVAGTSTGGILALAILHS). In terms of domain architecture, PNPLA spans 482–666 (LCLDGGGVKG…LANNPTLDAM (185 aa)). Residues 486–491 (GGGVKG) carry the GXGXXG motif. The GXSXG motif lies at 518 to 522 (GTSTG). Ser520 (nucleophile) is an active-site residue. The active-site Proton acceptor is the Asp653. The short motif at 653–655 (DGG) is the DGA/G element. Residues 678–687 (RKGQGNKVKK) are calmodulin-binding (1-9-14 motif). The tract at residues 749 to 760 (AWCEMVGIQYFR) is calmodulin-binding (IQ motif).

As to quaternary structure, homodimer formed by catalytic domains tightly interacting through a large hydrophobic interface. The contact area involves 3 alpha helices, several loops and a part of the beta sheet from each monomer. Both active sites of the dimer are in close proximity adopting an open conformation that provide sufficient space for phospholipid access and favoring cooperativity in deacylation-reacylation reactions. Each monomer has 9 ankyrin repeats stacked side-by-side in an elongated structure oriented outwards from the catalytic core. As to expression, expressed in neurons of central and peripheral nervous system. Highly expressed in Purkinje cells in cerebellum and dorsal and ventral horn neurons in the spinal cord. Expressed in testis (at protein level). Expressed in skeletal muscle (at protein level).

It localises to the cytoplasm. It is found in the cell membrane. The protein resides in the mitochondrion. The protein localises to the cell projection. Its subcellular location is the pseudopodium. It carries out the reaction a 1,2-diacyl-sn-glycero-3-phosphocholine + H2O = a 1-acyl-sn-glycero-3-phosphocholine + a fatty acid + H(+). It catalyses the reaction a 1-O-alkyl-2-acyl-sn-glycero-3-phosphocholine + H2O = a 1-O-alkyl-sn-glycero-3-phosphocholine + a fatty acid + H(+). The enzyme catalyses 1,2-dihexadecanoyl-sn-glycero-3-phosphocholine + H2O = 1-hexadecanoyl-sn-glycero-3-phosphocholine + hexadecanoate + H(+). The catalysed reaction is 1-hexadecanoyl-2-(9Z-octadecenoyl)-sn-glycero-3-phosphocholine + H2O = 1-hexadecanoyl-sn-glycero-3-phosphocholine + (9Z)-octadecenoate + H(+). It carries out the reaction 1-hexadecanoyl-2-(9Z,12Z-octadecadienoyl)-sn-glycero-3-phosphocholine + H2O = (9Z,12Z)-octadecadienoate + 1-hexadecanoyl-sn-glycero-3-phosphocholine + H(+). It catalyses the reaction 1-hexadecanoyl-2-(5Z,8Z,11Z,14Z-eicosatetraenoyl)-sn-glycero-3-phosphocholine + H2O = 1-hexadecanoyl-sn-glycero-3-phosphocholine + (5Z,8Z,11Z,14Z)-eicosatetraenoate + H(+). The enzyme catalyses 1-octadecanoyl-2-(5Z,8Z,11Z,14Z-eicosatetraenoyl)-sn-glycero-3-phosphocholine + H2O = 1-octadecanoyl-sn-glycero-3-phosphocholine + (5Z,8Z,11Z,14Z)-eicosatetraenoate + H(+). The catalysed reaction is 1-hexadecanoyl-2-(5Z,8Z,11Z,14Z-eicosatetraenoyl)-sn-glycero-3-phosphoethanolamine + H2O = 1-hexadecanoyl-sn-glycero-3-phosphoethanolamine + (5Z,8Z,11Z,14Z)-eicosatetraenoate + H(+). It carries out the reaction 1,2-dihexadecanoyl-sn-glycero-3-phosphate + H2O = 1-hexadecanoyl-sn-glycero-3-phosphate + hexadecanoate + H(+). It catalyses the reaction a 1-acyl-sn-glycero-3-phosphocholine + H2O = sn-glycerol 3-phosphocholine + a fatty acid + H(+). The enzyme catalyses 1-hexadecanoyl-sn-glycero-3-phosphocholine + H2O = sn-glycerol 3-phosphocholine + hexadecanoate + H(+). The catalysed reaction is 1-(5Z,8Z,11Z,14Z-eicosatetraenoyl)-sn-glycero-3-phosphocholine + H2O = sn-glycerol 3-phosphocholine + (5Z,8Z,11Z,14Z)-eicosatetraenoate + H(+). It carries out the reaction 2-(5Z,8Z,11Z,14Z)-eicosatetraenoyl-sn-glycero-3-phosphocholine + H2O = sn-glycerol 3-phosphocholine + (5Z,8Z,11Z,14Z)-eicosatetraenoate + H(+). It catalyses the reaction 1-O-hexadecyl-2-(5Z,8Z,11Z,14Z)-eicosatetraenoyl-sn-glycero-3-phosphocholine + H2O = 1-O-hexadecyl-sn-glycero-3-phosphocholine + (5Z,8Z,11Z,14Z)-eicosatetraenoate + H(+). The enzyme catalyses 1-O-hexadecyl-2-acetyl-sn-glycero-3-phosphocholine + H2O = 1-O-hexadecyl-sn-glycero-3-phosphocholine + acetate + H(+). The catalysed reaction is hexadecanoyl-CoA + H2O = hexadecanoate + CoA + H(+). It carries out the reaction 1',3'-bis[1,2-di-(9Z-octadecenoyl)-sn-glycero-3-phospho]-glycerol + H2O = 1'-[1,2-di-(9Z-octadecenoyl)-sn-glycero-3-phospho]-3'-[1-(9Z-octadecenoyl)-sn-glycero-3-phospho]-glycerol + (9Z)-octadecenoate + H(+). It catalyses the reaction 1'-[1,2-di-(9Z-octadecenoyl)-sn-glycero-3-phospho]-3'-[1-(9Z-octadecenoyl)-sn-glycero-3-phospho]-glycerol + H2O = 1',3'-bis-[1-(9Z-octadecenoyl)-sn-glycero-3-phospho]-glycerol + (9Z)-octadecenoate + H(+). The enzyme catalyses 1',3'-bis-[1,2-di-(9Z,12Z-octadecadienoyl)-sn-glycero-3-phospho]-glycerol + H2O = 1'-[1,2-di-(9Z,12Z-octadecadienoyl)-sn-glycero-3-phospho]-3'-[1-(9Z,12Z-octadecadienoyl)-sn-glycero-3-phospho]-glycerol + (9Z,12Z)-octadecadienoate + H(+). The catalysed reaction is 1-octadecanoyl-2-(15-hydroxy-(5Z,8Z,11Z,13E)-eicosatetraenoyl)-sn-glycero-3-phosphoethanolamine + H2O = 1-octadecanoyl-sn-glycero-3-phosphoethanolamine + 15-hydroxy-(5Z,8Z,11Z,13E)-eicosatetraenoate + H(+). Its activity is regulated as follows. Inhibited by calcium-activated calmodulin. Activated by ATP. Inhibited by bromoenol lactone (BEL). Calcium-independent phospholipase involved in phospholipid remodeling with implications in cellular membrane homeostasis, mitochondrial integrity and signal transduction. Hydrolyzes the ester bond of the fatty acyl group attached at sn-1 or sn-2 position of phospholipids (phospholipase A1 and A2 activity respectively), producing lysophospholipids that are used in deacylation-reacylation cycles. Hydrolyzes both saturated and unsaturated long fatty acyl chains in various glycerophospholipid classes such as phosphatidylcholines, phosphatidylethanolamines and phosphatidates, with a preference for hydrolysis at sn-2 position. Can further hydrolyze lysophospholipids carrying saturated fatty acyl chains (lysophospholipase activity). Upon oxidative stress, contributes to remodeling of mitochondrial phospholipids in pancreatic beta cells, in a repair mechanism to reduce oxidized lipid content. Preferentially hydrolyzes oxidized polyunsaturated fatty acyl chains from cardiolipins, yielding monolysocardiolipins that can be reacylated with unoxidized fatty acyls to regenerate native cardiolipin species. Hydrolyzes oxidized glycerophosphoethanolamines present in pancreatic islets, releasing oxidized polyunsaturated fatty acids such as hydroxyeicosatetraenoates (HETEs). Has thioesterase activity toward fatty-acyl CoA releasing CoA-SH known to facilitate fatty acid transport and beta-oxidation in mitochondria particularly in skeletal muscle. Plays a role in regulation of membrane dynamics and homeostasis. Selectively hydrolyzes sn-2 arachidonoyl group in plasmalogen phospholipids, structural components of lipid rafts and myelin. Regulates F-actin polymerization at the pseudopods, which is required for both speed and directionality of MCP1/CCL2-induced monocyte chemotaxis. Targets membrane phospholipids to produce potent lipid signaling messengers. Generates lysophosphatidate (LPA, 1-acyl-glycerol-3-phosphate), which acts via G-protein receptors in various cell types. Has phospholipase A2 activity toward platelet-activating factor (PAF, 1-O-alkyl-2-acetyl-sn-glycero-3-phosphocholine), likely playing a role in inactivation of this potent pro-inflammatory signaling lipid. In response to glucose, amplifies calcium influx in pancreatic beta cells to promote INS secretion. In Mus musculus (Mouse), this protein is 85/88 kDa calcium-independent phospholipase A2 (Pla2g6).